The chain runs to 433 residues: Enolase (433 aa).

Q167 provides a ligand contact to (2R)-2-phosphoglycerate. The Proton donor role is filled by E209. Residues D246, E291, and D318 each coordinate Mg(2+). K343, R372, S373, and K394 together coordinate (2R)-2-phosphoglycerate. K343 (proton acceptor) is an active-site residue.

The protein belongs to the enolase family. As to quaternary structure, component of the RNA degradosome, a multiprotein complex involved in RNA processing and mRNA degradation. The cofactor is Mg(2+).

It is found in the cytoplasm. It localises to the secreted. Its subcellular location is the cell surface. The enzyme catalyses (2R)-2-phosphoglycerate = phosphoenolpyruvate + H2O. Its pathway is carbohydrate degradation; glycolysis; pyruvate from D-glyceraldehyde 3-phosphate: step 4/5. In terms of biological role, catalyzes the reversible conversion of 2-phosphoglycerate (2-PG) into phosphoenolpyruvate (PEP). It is essential for the degradation of carbohydrates via glycolysis. In Tolumonas auensis (strain DSM 9187 / NBRC 110442 / TA 4), this protein is Enolase.